The following is a 526-amino-acid chain: Phosphoenolpyruvate carboxylase (526 aa).

Belongs to the PEPCase type 2 family. As to quaternary structure, homotetramer. The cofactor is Mg(2+).

The enzyme catalyses oxaloacetate + phosphate = phosphoenolpyruvate + hydrogencarbonate. Catalyzes the irreversible beta-carboxylation of phosphoenolpyruvate (PEP) to form oxaloacetate (OAA), a four-carbon dicarboxylic acid source for the tricarboxylic acid cycle. The chain is Phosphoenolpyruvate carboxylase from Methanosarcina acetivorans (strain ATCC 35395 / DSM 2834 / JCM 12185 / C2A).